We begin with the raw amino-acid sequence, 211 residues long: Mitotic spindle assembly checkpoint protein MAD2B (211 aa).

The 191-residue stretch at 13–203 (QVVADILCEF…SDILKMQLYV (191 aa)) folds into the HORMA domain.

Homooligomer. Interacts with rev1. Interacts with rev3l. Interacts with fzr1 (in complex with the anaphase promoting complex APC). May interact with cdc20.

It is found in the nucleus. It localises to the cytoplasm. The protein resides in the cytoskeleton. The protein localises to the spindle. Functionally, adapter protein able to interact with different proteins and involved in different biological processes. Mediates the interaction between the error-prone DNA polymerase zeta catalytic subunit rev3l and the inserter polymerase rev1, thereby mediating the second polymerase switching in translesion DNA synthesis. Translesion DNA synthesis releases the replication blockade of replicative polymerases, stalled in presence of DNA lesions. May also play a role in signal transduction in response to DNA damage. May regulate the activation of the anaphase promoting complex APC thereby regulating progression through the cell cycle. Through transcriptional regulation may play a role in epithelial-mesenchymal transdifferentiation. This chain is Mitotic spindle assembly checkpoint protein MAD2B (mad2l2), found in Danio rerio (Zebrafish).